Consider the following 195-residue polypeptide: Probable septum site-determining protein MinC (195 aa).

The protein belongs to the MinC family. Interacts with MinD and FtsZ.

Functionally, cell division inhibitor that blocks the formation of polar Z ring septums. Rapidly oscillates between the poles of the cell to destabilize FtsZ filaments that have formed before they mature into polar Z rings. Prevents FtsZ polymerization. In Helicobacter pylori (strain G27), this protein is Probable septum site-determining protein MinC.